A 321-amino-acid chain; its full sequence is Methionine import ATP-binding protein MetN (321 aa).

Positions 2-237 constitute an ABC transporter domain; sequence ISIKNVNKYY…NTKGLRKLIG (236 aa). Position 34-41 (34-41) interacts with ATP; that stretch reads GHSGAGKS.

This sequence belongs to the ABC transporter superfamily. Methionine importer (TC 3.A.1.24) family. As to quaternary structure, the complex is composed of two ATP-binding proteins (MetN), two transmembrane proteins (MetI) and a solute-binding protein (MetQ).

The protein localises to the cell membrane. The enzyme catalyses L-methionine(out) + ATP + H2O = L-methionine(in) + ADP + phosphate + H(+). It catalyses the reaction D-methionine(out) + ATP + H2O = D-methionine(in) + ADP + phosphate + H(+). Functionally, part of the ABC transporter complex MetNIQ involved in methionine import. Responsible for energy coupling to the transport system. The polypeptide is Methionine import ATP-binding protein MetN (Clostridioides difficile (strain 630) (Peptoclostridium difficile)).